We begin with the raw amino-acid sequence, 296 residues long: GTP cyclohydrolase FolE2 (296 aa).

This sequence belongs to the GTP cyclohydrolase IV family.

The enzyme catalyses GTP + H2O = 7,8-dihydroneopterin 3'-triphosphate + formate + H(+). It functions in the pathway cofactor biosynthesis; 7,8-dihydroneopterin triphosphate biosynthesis; 7,8-dihydroneopterin triphosphate from GTP: step 1/1. Its function is as follows. Converts GTP to 7,8-dihydroneopterin triphosphate. The protein is GTP cyclohydrolase FolE2 of Ectopseudomonas mendocina (strain ymp) (Pseudomonas mendocina).